Consider the following 172-residue polypeptide: uncharacterized protein (172 aa).

A disordered region spans residues 22–64; the sequence is RSVSSSPAAKQPAPGTVAQSFPPGELALRDETGGRGRGTRGIR.

This is an uncharacterized protein from Human cytomegalovirus (strain AD169) (HHV-5).